An 85-amino-acid chain; its full sequence is uncharacterized protein (85 aa).

This is an uncharacterized protein from Gallid herpesvirus 2 (strain Chicken/Md5/ATCC VR-987) (GaHV-2).